Reading from the N-terminus, the 701-residue chain is UvrABC system protein B (701 aa).

The Helicase ATP-binding domain occupies 28-188; that stretch reads RRIRAGERDV…VDVQYTRNDL (161 aa). Residue 41 to 48 coordinates ATP; it reads GATGTGKS. Positions 94-117 match the Beta-hairpin motif; it reads YYDYYQPEAYIAQTDTYIEKDSSI. In terms of domain architecture, Helicase C-terminal spans 432–598; the sequence is QIDDLIGEIR…PLRKKIADIL (167 aa). The segment at 606–636 is disordered; that stretch reads DDTEAAESVPIGGSGRNSSRGRRAQGEPGRA. In terms of domain architecture, UVR spans 656-691; the sequence is ADLIKDLTSQMMVAARDLQFELAARFRDEIADLKKE.

Belongs to the UvrB family. Forms a heterotetramer with UvrA during the search for lesions. Interacts with UvrC in an incision complex.

Its subcellular location is the cytoplasm. In terms of biological role, the UvrABC repair system catalyzes the recognition and processing of DNA lesions. A damage recognition complex composed of 2 UvrA and 2 UvrB subunits scans DNA for abnormalities. Upon binding of the UvrA(2)B(2) complex to a putative damaged site, the DNA wraps around one UvrB monomer. DNA wrap is dependent on ATP binding by UvrB and probably causes local melting of the DNA helix, facilitating insertion of UvrB beta-hairpin between the DNA strands. Then UvrB probes one DNA strand for the presence of a lesion. If a lesion is found the UvrA subunits dissociate and the UvrB-DNA preincision complex is formed. This complex is subsequently bound by UvrC and the second UvrB is released. If no lesion is found, the DNA wraps around the other UvrB subunit that will check the other stand for damage. The polypeptide is UvrABC system protein B (Mycobacterium ulcerans (strain Agy99)).